Here is a 307-residue protein sequence, read N- to C-terminus: Pseudouridine-5'-phosphate glycosidase (307 aa).

Glu-28 functions as the Proton donor in the catalytic mechanism. 2 residues coordinate substrate: Lys-89 and Val-109. Asp-141 lines the Mn(2+) pocket. Residue 143-145 participates in substrate binding; sequence SAD. The Nucleophile role is filled by Lys-162.

The protein belongs to the pseudouridine-5'-phosphate glycosidase family. As to quaternary structure, homotrimer. Mn(2+) is required as a cofactor.

The enzyme catalyses D-ribose 5-phosphate + uracil = psi-UMP + H2O. Catalyzes the reversible cleavage of pseudouridine 5'-phosphate (PsiMP) to ribose 5-phosphate and uracil. Functions biologically in the cleavage direction, as part of a pseudouridine degradation pathway. This Alkaliphilus metalliredigens (strain QYMF) protein is Pseudouridine-5'-phosphate glycosidase.